We begin with the raw amino-acid sequence, 451 residues long: Phosphoglucosamine mutase (451 aa).

Ser102 (phosphoserine intermediate) is an active-site residue. Positions 102, 243, 245, and 247 each coordinate Mg(2+). Residue Ser102 is modified to Phosphoserine.

Belongs to the phosphohexose mutase family. The cofactor is Mg(2+). Activated by phosphorylation.

The catalysed reaction is alpha-D-glucosamine 1-phosphate = D-glucosamine 6-phosphate. Catalyzes the conversion of glucosamine-6-phosphate to glucosamine-1-phosphate. The protein is Phosphoglucosamine mutase of Brucella abortus (strain 2308).